Reading from the N-terminus, the 335-residue chain is Beta-ketoacyl-[acyl-carrier-protein] synthase III (335 aa).

Residues cysteine 119 and histidine 261 contribute to the active site. An ACP-binding region spans residues 262–266; it reads QANQR. Residue asparagine 291 is part of the active site.

This sequence belongs to the thiolase-like superfamily. FabH family. As to quaternary structure, homodimer.

It localises to the cytoplasm. It carries out the reaction malonyl-[ACP] + acetyl-CoA + H(+) = 3-oxobutanoyl-[ACP] + CO2 + CoA. It participates in lipid metabolism; fatty acid biosynthesis. Catalyzes the condensation reaction of fatty acid synthesis by the addition to an acyl acceptor of two carbons from malonyl-ACP. Catalyzes the first condensation reaction which initiates fatty acid synthesis and may therefore play a role in governing the total rate of fatty acid production. Possesses both acetoacetyl-ACP synthase and acetyl transacylase activities. Its substrate specificity determines the biosynthesis of branched-chain and/or straight-chain of fatty acids. The chain is Beta-ketoacyl-[acyl-carrier-protein] synthase III from Prochlorococcus marinus (strain MIT 9301).